A 96-amino-acid polypeptide reads, in one-letter code: Copper-sensing transcriptional repressor RicR (96 aa).

N-acetylthreonine is present on T2. Residues C38, H63, and C67 each contribute to the Cu cation site.

Belongs to the CsoR family.

The protein localises to the cytoplasm. Its function is as follows. Under low copper conditions, represses the expression of lpqS, Rv2963, mymT, socA, socB, mmcO and its own expression. In the presence of copper, RicR dissociates from DNA, leading to the expression of the target genes. Members of the RicR regulon are important for copper resistance during infections and full virulence in a mouse model of infection. This Mycobacterium tuberculosis (strain ATCC 25618 / H37Rv) protein is Copper-sensing transcriptional repressor RicR.